Reading from the N-terminus, the 232-residue chain is Lipid A 1-phosphatase (232 aa).

6 consecutive transmembrane segments (helical) span residues 10–30 (LFIT…PVGA), 42–62 (ELLT…LLFF), 80–100 (ALYV…SGLL), 136–156 (FPSG…LLFP), 160–180 (VAFI…GAHY), and 183–203 (DVIA…IVYA).

Belongs to the lipid A LpxE 1-phosphatase family.

It localises to the cell inner membrane. The protein operates within bacterial outer membrane biogenesis; LPS lipid A biosynthesis. Probably removes the 1-phosphate moiety from lipid A species. Does not seem to act on other membrane components, nor does it dephosphorylate the 4'-phosphate group of lipid A and/or lipid A precursors. The chain is Lipid A 1-phosphatase from Rhizobium etli (strain ATCC 51251 / DSM 11541 / JCM 21823 / NBRC 15573 / CFN 42).